Consider the following 155-residue polypeptide: 3-hydroxyacyl-[acyl-carrier-protein] dehydratase FabZ (155 aa).

The active site involves H58.

It belongs to the thioester dehydratase family. FabZ subfamily.

Its subcellular location is the cytoplasm. The enzyme catalyses a (3R)-hydroxyacyl-[ACP] = a (2E)-enoyl-[ACP] + H2O. Involved in unsaturated fatty acids biosynthesis. Catalyzes the dehydration of short chain beta-hydroxyacyl-ACPs and long chain saturated and unsaturated beta-hydroxyacyl-ACPs. This Rhizobium etli (strain CIAT 652) protein is 3-hydroxyacyl-[acyl-carrier-protein] dehydratase FabZ.